The primary structure comprises 1027 residues: Translation initiation factor IF-2 (1027 aa).

Positions 31 to 433 (YVKSASSTVE…GGVRLPRGNG (403 aa)) are disordered. Positions 57 to 68 (KKGGGDSNGRAG) are enriched in gly residues. A compositionally biased stretch (pro residues) spans 110–122 (GPKPGPKPGPKAP). Residues 123 to 145 (APETKPFEEAPAPAAKADAPAQP) are compositionally biased toward low complexity. The span at 148–171 (EQPRSEQPRSEQPRSEQPRSERSG) shows a compositional bias: basic and acidic residues. Composition is skewed to pro residues over residues 174–188 (PGGP…PKPG) and 201–212 (PPKPQSPKPGPR). Gly residues predominate over residues 237–268 (PGGGQRQGGQGPGRGGPQGGRPDRQGGGGQGA). Over residues 293-302 (GMMPPRPNPG) the composition is skewed to pro residues. The span at 311–397 (SGGGPGGGRG…GAAGAFGRPG (87 aa)) shows a compositional bias: gly residues. A compositionally biased stretch (basic residues) spans 401–410 (RRGRKSKRQK). The region spanning 523-695 (SRPPVVTVMG…ILLTADATLD (173 aa)) is the tr-type G domain. Residues 532 to 539 (GHVDHGKT) form a G1 region. 532-539 (GHVDHGKT) lines the GTP pocket. Residues 557-561 (GITQH) form a G2 region. The tract at residues 582-585 (DTPG) is G3. GTP contacts are provided by residues 582-586 (DTPGH) and 636-639 (NKID). A G4 region spans residues 636–639 (NKID). A G5 region spans residues 672–674 (SAR).

This sequence belongs to the TRAFAC class translation factor GTPase superfamily. Classic translation factor GTPase family. IF-2 subfamily.

The protein localises to the cytoplasm. One of the essential components for the initiation of protein synthesis. Protects formylmethionyl-tRNA from spontaneous hydrolysis and promotes its binding to the 30S ribosomal subunits. Also involved in the hydrolysis of GTP during the formation of the 70S ribosomal complex. The polypeptide is Translation initiation factor IF-2 (Saccharopolyspora erythraea (strain ATCC 11635 / DSM 40517 / JCM 4748 / NBRC 13426 / NCIMB 8594 / NRRL 2338)).